The following is a 2167-amino-acid chain: Beige protein homolog 1 (2167 aa).

The BEACH-type PH domain occupies 1368 to 1499 (KDNDSIATIW…VRDDVLRVLN (132 aa)). The BEACH domain maps to 1545–1839 (SANNSLIDGF…QIFQEPHPEK (295 aa)). Lysine 1667 participates in a covalent cross-link: Glycyl lysine isopeptide (Lys-Gly) (interchain with G-Cter in ubiquitin). 5 WD repeats span residues 1927-1965 (THMA…HSVS), 1976-2015 (GHLC…LVRQ), 2017-2054 (TNDA…YTSK), 2072-2111 (KLDA…HNEW), and 2129-2167 (SIKG…AIWY).

The protein resides in the cytoplasm. It is found in the membrane. Functionally, may be involved in protein sorting and cell wall formation. The chain is Beige protein homolog 1 (BPH1) from Saccharomyces cerevisiae (strain ATCC 204508 / S288c) (Baker's yeast).